We begin with the raw amino-acid sequence, 308 residues long: Elongation factor Ts (308 aa).

The tract at residues 80 to 83 (TDFV) is involved in Mg(2+) ion dislocation from EF-Tu.

Belongs to the EF-Ts family.

The protein localises to the cytoplasm. Its function is as follows. Associates with the EF-Tu.GDP complex and induces the exchange of GDP to GTP. It remains bound to the aminoacyl-tRNA.EF-Tu.GTP complex up to the GTP hydrolysis stage on the ribosome. The sequence is that of Elongation factor Ts from Rhizobium etli (strain CIAT 652).